Here is a 62-residue protein sequence, read N- to C-terminus: MAKTVVRKNESFDDALRRFKRTVSRSGTLQEYRKREFYEKPSVKKKLKSEAARKRKAKKKRF.

Basic and acidic residues predominate over residues 43–52 (VKKKLKSEAA). The tract at residues 43 to 62 (VKKKLKSEAARKRKAKKKRF) is disordered. Basic residues predominate over residues 53 to 62 (RKRKAKKKRF).

This sequence belongs to the bacterial ribosomal protein bS21 family.

In Levilactobacillus brevis (strain ATCC 367 / BCRC 12310 / CIP 105137 / JCM 1170 / LMG 11437 / NCIMB 947 / NCTC 947) (Lactobacillus brevis), this protein is Small ribosomal subunit protein bS21.